Consider the following 111-residue polypeptide: Large ribosomal subunit protein uL22 (111 aa).

It belongs to the universal ribosomal protein uL22 family. Part of the 50S ribosomal subunit.

Its function is as follows. This protein binds specifically to 23S rRNA; its binding is stimulated by other ribosomal proteins, e.g. L4, L17, and L20. It is important during the early stages of 50S assembly. It makes multiple contacts with different domains of the 23S rRNA in the assembled 50S subunit and ribosome. The globular domain of the protein is located near the polypeptide exit tunnel on the outside of the subunit, while an extended beta-hairpin is found that lines the wall of the exit tunnel in the center of the 70S ribosome. This is Large ribosomal subunit protein uL22 from Legionella pneumophila (strain Lens).